A 339-amino-acid chain; its full sequence is Phosphate acyltransferase (339 aa).

The protein belongs to the PlsX family. In terms of assembly, homodimer. Probably interacts with PlsY.

It localises to the cytoplasm. The catalysed reaction is a fatty acyl-[ACP] + phosphate = an acyl phosphate + holo-[ACP]. Its pathway is lipid metabolism; phospholipid metabolism. Functionally, catalyzes the reversible formation of acyl-phosphate (acyl-PO(4)) from acyl-[acyl-carrier-protein] (acyl-ACP). This enzyme utilizes acyl-ACP as fatty acyl donor, but not acyl-CoA. This is Phosphate acyltransferase from Dechloromonas aromatica (strain RCB).